The sequence spans 337 residues: Aspartate-semialdehyde dehydrogenase 2 (337 aa).

Residues 13-16 (TGAV) and 41-42 (RS) contribute to the NADP(+) site. Arg101 lines the phosphate pocket. Cys132 acts as the Acyl-thioester intermediate in catalysis. Residue Gln159 coordinates substrate. Position 162–163 (162–163 (SG)) interacts with NADP(+). Lys216 serves as a coordination point for phosphate. Arg238 is a binding site for substrate. His245 serves as the catalytic Proton acceptor. Residue Asn316 coordinates NADP(+).

It belongs to the aspartate-semialdehyde dehydrogenase family. As to quaternary structure, homodimer.

The enzyme catalyses L-aspartate 4-semialdehyde + phosphate + NADP(+) = 4-phospho-L-aspartate + NADPH + H(+). Its pathway is amino-acid biosynthesis; L-lysine biosynthesis via DAP pathway; (S)-tetrahydrodipicolinate from L-aspartate: step 2/4. It participates in amino-acid biosynthesis; L-methionine biosynthesis via de novo pathway; L-homoserine from L-aspartate: step 2/3. It functions in the pathway amino-acid biosynthesis; L-threonine biosynthesis; L-threonine from L-aspartate: step 2/5. Functionally, catalyzes the NADPH-dependent formation of L-aspartate-semialdehyde (L-ASA) by the reductive dephosphorylation of L-aspartyl-4-phosphate. In Vibrio cholerae serotype O1 (strain ATCC 39315 / El Tor Inaba N16961), this protein is Aspartate-semialdehyde dehydrogenase 2 (asd2).